A 173-amino-acid chain; its full sequence is Shikimate kinase 1 (173 aa).

14 to 19 (GAGKST) is a binding site for ATP. Position 18 (Ser-18) interacts with Mg(2+). Asp-36, Arg-60, and Gly-82 together coordinate substrate. Arg-120 lines the ATP pocket. Residue Arg-140 participates in substrate binding. Gln-157 provides a ligand contact to ATP.

Belongs to the shikimate kinase family. In terms of assembly, monomer. The cofactor is Mg(2+).

Its subcellular location is the cytoplasm. The enzyme catalyses shikimate + ATP = 3-phosphoshikimate + ADP + H(+). The protein operates within metabolic intermediate biosynthesis; chorismate biosynthesis; chorismate from D-erythrose 4-phosphate and phosphoenolpyruvate: step 5/7. Its function is as follows. Catalyzes the specific phosphorylation of the 3-hydroxyl group of shikimic acid using ATP as a cosubstrate. The polypeptide is Shikimate kinase 1 (Serratia proteamaculans (strain 568)).